Reading from the N-terminus, the 165-residue chain is MSHPALTQLRALRYFKEIPALDPQLLDWLLLEDSMTKRFEQQGKTVSVTMIREGFVEQNEIPEELPLLPKESRYWLREILLCADGEPWLAGRTVVPVSTLSGPELALQKLGKTPLGRYLFTSSTLTRDFIEIGRDAGLWGRRSRLRLSGKPLLLTELFLPASPLY.

M35, R77, L115, and E156 together coordinate substrate.

The protein belongs to the UbiC family. Monomer.

It localises to the cytoplasm. The catalysed reaction is chorismate = 4-hydroxybenzoate + pyruvate. It functions in the pathway cofactor biosynthesis; ubiquinone biosynthesis. Removes the pyruvyl group from chorismate, with concomitant aromatization of the ring, to provide 4-hydroxybenzoate (4HB) for the ubiquinone pathway. In Shigella boydii serotype 18 (strain CDC 3083-94 / BS512), this protein is Chorismate pyruvate-lyase.